The chain runs to 359 residues: Ribosomal RNA large subunit methyltransferase M (359 aa).

S-adenosyl-L-methionine-binding positions include Ser186, 219 to 222 (CPGG), Asp238, Asp258, and Asp275. Catalysis depends on Lys304, which acts as the Proton acceptor.

It belongs to the class I-like SAM-binding methyltransferase superfamily. RNA methyltransferase RlmE family. RlmM subfamily. In terms of assembly, monomer.

Its subcellular location is the cytoplasm. It catalyses the reaction cytidine(2498) in 23S rRNA + S-adenosyl-L-methionine = 2'-O-methylcytidine(2498) in 23S rRNA + S-adenosyl-L-homocysteine + H(+). Its function is as follows. Catalyzes the 2'-O-methylation at nucleotide C2498 in 23S rRNA. The chain is Ribosomal RNA large subunit methyltransferase M from Vibrio vulnificus (strain YJ016).